We begin with the raw amino-acid sequence, 1774 residues long: Receptor-mediated endocytosis protein 6 homolog (1774 aa).

The Ras-GAP domain maps to 157 to 396 (ELLLKLLREL…EDVVAILPQQ (240 aa)). Disordered regions lie at residues 444–480 (IPKQ…NNRS), 517–564 (PLAN…PAPT), 661–727 (AAHS…HHHG), 784–811 (ENTL…RNFS), 869–947 (AEID…EDSA), 983–1102 (ESSF…EEQP), 1115–1142 (QEEQ…SMEQ), and 1214–1342 (RAGA…GGRS). Composition is skewed to low complexity over residues 519–533 (ANGQ…SASN) and 540–557 (SSHS…AAPA). A compositionally biased stretch (basic and acidic residues) spans 674-683 (QQERDVHENE). A compositionally biased stretch (polar residues) spans 688–713 (DMVSANVSGRGTPNISGRDTPSSQVT). Basic and acidic residues predominate over residues 794-809 (RGGDRGDRGDRDRDRN). The span at 887–905 (PGSGGGAGVPEAGGGGGVV) shows a compositional bias: gly residues. The segment covering 929-944 (DPDRERLRNGSERSQE) has biased composition (basic and acidic residues). The segment covering 1011-1027 (MRRQTSAESSISNQSLN) has biased composition (polar residues). Basic residues predominate over residues 1038–1047 (LAKHHHHHQH). Positions 1048-1060 (RDRDRDRDRDRDH) are enriched in basic and acidic residues. Basic residues predominate over residues 1061–1076 (REHHHKSAALKKKKHQ). Over residues 1077–1087 (EHKEHQHRDLI) the composition is skewed to basic and acidic residues. Positions 1091–1101 (DCSEDKDEEEQ) are enriched in acidic residues. Low complexity predominate over residues 1115 to 1125 (QEEQQQQQQQQ). A compositionally biased stretch (basic and acidic residues) spans 1246-1291 (SADKEQQPYRDRERERDRERDRERDRDRERDRDRDRDRDRDREHHS). Low complexity predominate over residues 1310-1335 (SSSSKNNAIAIAAPSSINPNPSPSSA). A coiled-coil region spans residues 1516-1546 (RHRQQLLLRSEQLEQLEVRLRSEARSCQRCL). One can recognise a VPS9 domain in the interval 1635-1774 (VSRDTVLSAH…KFIKTMDYLD (140 aa)).

It belongs to the GAPVD1 family.

The protein resides in the membrane. Acts both as a GTPase-activating protein (GAP) and a guanine nucleotide exchange factor (GEF), and participates in endocytosis. The protein is Receptor-mediated endocytosis protein 6 homolog of Drosophila pseudoobscura pseudoobscura (Fruit fly).